A 383-amino-acid polypeptide reads, in one-letter code: Protein FAM217B (383 aa).

6 disordered regions span residues 1 to 70 (MNAG…CQGA), 89 to 115 (ADED…PPDL), 200 to 222 (KAKG…KSPG), 232 to 251 (SKPL…RKKA), 284 to 325 (QTLE…HIRV), and 338 to 383 (SCKA…YKLK). Over residues 8-43 (NKVQHSKNSSGKRQSKSQVPHASSQPRSSLTAVTQP) the composition is skewed to polar residues. Positions 44-56 (TEEKLKESISPEA) are enriched in basic and acidic residues. A compositionally biased stretch (polar residues) spans 374–383 (GVKQNTYKLK).

Belongs to the FAM217 family.

In Homo sapiens (Human), this protein is Protein FAM217B (FAM217B).